Here is a 315-residue protein sequence, read N- to C-terminus: MRASPIRIPTVTSDTDWDFCFHLSQQTKIPEHQRTDESSPTSGSEESEEDTKAKEKVIDHMSHPREKLAQSQKKIAQLIKGKKNIEANKELIRCVTLSRIIFGEEHWKCAQALATLAYGYLTLRGLPAQAKKHAESAKNVLLTWKGTTTSDKEEKQILETLVMLYYTLGVVCLLQNHGREAYFNLQKSERNMKELRESYKGGTCGLQVSEKDLTVALGRASLANCRLNLALVYFEKAVDNVIANKGDSTSELVSLYQEIAQIEQLRRNHEQAIQYLHQAHSICVSLYTEVSPQAAEASALLAKAYAMSGEVQHKA.

The disordered stretch occupies residues 28–56; sequence KIPEHQRTDESSPTSGSEESEEDTKAKEK. 3 coiled-coil regions span residues 65 to 90, 179 to 200, and 250 to 280; these read REKL…ANKE, REAY…ESYK, and SELV…HQAH.

The protein localises to the cytoplasm. Its subcellular location is the cytoskeleton. It localises to the microtubule organizing center. The protein resides in the centrosome. It is found in the spindle. The protein localises to the midbody. The protein is Tetratricopeptide repeat protein 23-like (TTC23L) of Bos taurus (Bovine).